Here is a 50-residue protein sequence, read N- to C-terminus: Insulin-1 (50 aa).

Cystine bridges form between Cys-7-Cys-36, Cys-19-Cys-49, and Cys-35-Cys-40.

This sequence belongs to the insulin family. Heterodimer of a B chain and an A chain linked by two disulfide bonds.

It localises to the secreted. Its function is as follows. Insulin decreases blood glucose concentration. It increases cell permeability to monosaccharides, amino acids and fatty acids. It accelerates glycolysis, the pentose phosphate cycle, and glycogen synthesis in liver. The chain is Insulin-1 from Katsuwonus pelamis (Skipjack tuna).